Here is a 467-residue protein sequence, read N- to C-terminus: Proton extrusion protein PxcA (467 aa).

The disordered stretch occupies residues 183 to 205 (TSPPQLIRPRTEQNKKPRGKADT). The span at 191–203 (PRTEQNKKPRGKA) shows a compositional bias: basic and acidic residues. 4 helical membrane-spanning segments follow: residues 249–269 (FILLLIIVPLLTHQLSKALIV), 352–372 (IFSVGAFIWLLLVSKPSIMVL), 391–411 (IIILFTDVFVGFHSPHGWEVI), and 427–447 (FIFLFIATFPVILDTIFKYWI).

Belongs to the CemA family.

The protein localises to the cell inner membrane. Its function is as follows. Required for H(+) efflux immediately after light irradiation to form a rapid H(+) concentration gradient across the thylakoid membranes. Together with PxcL, contributes to transient H(+) uptake following dark to light transition. This is Proton extrusion protein PxcA from Trichormus variabilis (strain ATCC 29413 / PCC 7937) (Anabaena variabilis).